Reading from the N-terminus, the 445-residue chain is Exodeoxyribonuclease 7 large subunit (445 aa).

This sequence belongs to the XseA family. In terms of assembly, heterooligomer composed of large and small subunits.

The protein localises to the cytoplasm. It catalyses the reaction Exonucleolytic cleavage in either 5'- to 3'- or 3'- to 5'-direction to yield nucleoside 5'-phosphates.. In terms of biological role, bidirectionally degrades single-stranded DNA into large acid-insoluble oligonucleotides, which are then degraded further into small acid-soluble oligonucleotides. The protein is Exodeoxyribonuclease 7 large subunit of Shewanella pealeana (strain ATCC 700345 / ANG-SQ1).